A 215-amino-acid polypeptide reads, in one-letter code: Orotate phosphoribosyltransferase (215 aa).

Residue lysine 26 coordinates 5-phospho-alpha-D-ribose 1-diphosphate. Residue 34–35 (FF) coordinates orotate. 5-phospho-alpha-D-ribose 1-diphosphate contacts are provided by residues 72–73 (YK), arginine 99, lysine 100, lysine 103, histidine 105, and 124–132 (DDVITAGTA). Residues threonine 128 and arginine 156 each contribute to the orotate site.

It belongs to the purine/pyrimidine phosphoribosyltransferase family. PyrE subfamily. Homodimer. The cofactor is Mg(2+).

The enzyme catalyses orotidine 5'-phosphate + diphosphate = orotate + 5-phospho-alpha-D-ribose 1-diphosphate. It participates in pyrimidine metabolism; UMP biosynthesis via de novo pathway; UMP from orotate: step 1/2. Functionally, catalyzes the transfer of a ribosyl phosphate group from 5-phosphoribose 1-diphosphate to orotate, leading to the formation of orotidine monophosphate (OMP). The protein is Orotate phosphoribosyltransferase of Shewanella oneidensis (strain ATCC 700550 / JCM 31522 / CIP 106686 / LMG 19005 / NCIMB 14063 / MR-1).